A 551-amino-acid polypeptide reads, in one-letter code: Chaperonin GroEL (551 aa).

ATP contacts are provided by residues 30–33 (TLGP), Lys51, 87–91 (DGTTT), Gly415, and Asp496.

The protein belongs to the chaperonin (HSP60) family. As to quaternary structure, forms a cylinder of 14 subunits composed of two heptameric rings stacked back-to-back. Interacts with the co-chaperonin GroES.

The protein resides in the cytoplasm. It carries out the reaction ATP + H2O + a folded polypeptide = ADP + phosphate + an unfolded polypeptide.. In terms of biological role, together with its co-chaperonin GroES, plays an essential role in assisting protein folding. The GroEL-GroES system forms a nano-cage that allows encapsulation of the non-native substrate proteins and provides a physical environment optimized to promote and accelerate protein folding. The polypeptide is Chaperonin GroEL (Maricaulis maris (strain MCS10) (Caulobacter maris)).